A 124-amino-acid chain; its full sequence is Small ribosomal subunit protein bS6 (124 aa).

The interval 96-124 (ETAPSPMMKEVQREEARKAAQTTTEGQAA) is disordered. The segment covering 115–124 (AQTTTEGQAA) has biased composition (polar residues).

Belongs to the bacterial ribosomal protein bS6 family.

Functionally, binds together with bS18 to 16S ribosomal RNA. The sequence is that of Small ribosomal subunit protein bS6 from Cupriavidus necator (strain ATCC 17699 / DSM 428 / KCTC 22496 / NCIMB 10442 / H16 / Stanier 337) (Ralstonia eutropha).